The following is a 30-amino-acid chain: Cyclotide mden-E (30 aa).

The segment at residues 1–30 is a cross-link (cyclopeptide (Gly-Asn)); the sequence is GIPCGESCVYIPCITAAIGCSCKSKVCYRN. Disulfide bonds link Cys-4–Cys-20, Cys-8–Cys-22, and Cys-13–Cys-27.

This sequence belongs to the cyclotide family. Bracelet subfamily. In terms of processing, this is a cyclic peptide.

Its function is as follows. Probably participates in a plant defense mechanism. This chain is Cyclotide mden-E, found in Melicytus dentatus (Tree violet).